Here is a 130-residue protein sequence, read N- to C-terminus: Small ribosomal subunit protein uS11c (130 aa).

Belongs to the universal ribosomal protein uS11 family. Part of the 30S ribosomal subunit.

It localises to the plastid. The protein localises to the chloroplast. This chain is Small ribosomal subunit protein uS11c, found in Oedogonium cardiacum (Filamentous green alga).